The chain runs to 565 residues: Phosphoenolpyruvate-protein phosphotransferase (565 aa).

The active-site Tele-phosphohistidine intermediate is the histidine 191. Phosphoenolpyruvate is bound by residues arginine 289 and arginine 325. Mg(2+) contacts are provided by glutamate 427 and aspartate 451. Residues 450-451 (ND) and arginine 461 contribute to the phosphoenolpyruvate site. Cysteine 498 functions as the Proton donor in the catalytic mechanism.

This sequence belongs to the PEP-utilizing enzyme family. Homodimer. Mg(2+) is required as a cofactor.

The protein localises to the cytoplasm. The catalysed reaction is L-histidyl-[protein] + phosphoenolpyruvate = N(pros)-phospho-L-histidyl-[protein] + pyruvate. Functionally, general (non sugar-specific) component of the phosphoenolpyruvate-dependent sugar phosphotransferase system (sugar PTS). This major carbohydrate active-transport system catalyzes the phosphorylation of incoming sugar substrates concomitantly with their translocation across the cell membrane. Enzyme I transfers the phosphoryl group from phosphoenolpyruvate (PEP) to the phosphoryl carrier protein (HPr). This chain is Phosphoenolpyruvate-protein phosphotransferase (ptsI), found in Haloferax volcanii (strain ATCC 29605 / DSM 3757 / JCM 8879 / NBRC 14742 / NCIMB 2012 / VKM B-1768 / DS2) (Halobacterium volcanii).